The sequence spans 826 residues: MIVRNLLGKNRLCCLQPKLLLSTLSQRPQLQLSLQLLCRATRLYATVNDIALPKTRNIGIIAHIDAGKTTTTERMIYYSGKSKRIGNVDEGDTVTDYLQAERERGITIQLAAITIPWNNHKINIIDTPGHADFTFEVIRSLRVLDGAVTILDAVAGVEAQTEKVWKQASALKLPRMIYVNKMDRPGAGFSRTVKEVIQKLETRVVLCNTPFFENQELNPEFRGVIDVIHGKLLKWKEADEFGKEIDVEDIDETKPELYDVYCKAREYMVETLGEYDESIIDAFLENDENYLKISPELLNRAIRKATIDNYLVPVFCGASFRNIGVQPLMDGITNYLPSPLETPVPDIKSKKKQEISAKMANNGLIINNDPKLTVGLVFKVMNHATRGPMAFVRIYSGKLVANSMVVNSRTGAKHSVRKLLIMHGDQPEEVKFIGAGNIGVISGFEDEFHTGDTVISHATSKKAVGTMESTIKLMPIDIPPPLFNSSIEPFTAGDEAHMKKCIDILIREDPSLKVHTEEDMGQTILSGMGELHLEIVRDRLINDMKVKANLRDIAVAYKESYIGKTPTNGLFETESIQVKLSIEHVDDCKSFEDVDGAIIFEDQNNVIIVPESLASETVQSATEGRRWKCPSSYEELHEAVVNGCSMALQTGGPHLGLSLHSTLVKVEFWNAPVEVNEELIPPLMNAAREAVQSVKASENKFGFLEPLMNVRVFVDSADMGEVSHDLSQRCQALIHSVEDESLLNLETANWAKDEAERAYLPPDYTMSKTALADNYKTRKVIHAETPLKEMIGYLSKLRSLTGGKATFDMSFLGMRRVTQSRLNQIF.

The N-terminal 44 residues, 1–44 (MIVRNLLGKNRLCCLQPKLLLSTLSQRPQLQLSLQLLCRATRLY), are a transit peptide targeting the mitochondrion. Residues 53 to 340 (PKTRNIGIIA…GITNYLPSPL (288 aa)) form the tr-type G domain. Residues 62–69 (AHIDAGKT), 126–130 (DTPGH), and 180–183 (NKMD) each bind GTP.

The protein belongs to the TRAFAC class translation factor GTPase superfamily. Classic translation factor GTPase family. EF-G/EF-2 subfamily.

The protein resides in the mitochondrion. In terms of biological role, mitochondrial GTPase that mediates the disassembly of ribosomes from messenger RNA at the termination of mitochondrial protein biosynthesis. Not involved in the GTP-dependent ribosomal translocation step during translation elongation. The sequence is that of Ribosome-releasing factor 2, mitochondrial from Lodderomyces elongisporus (strain ATCC 11503 / CBS 2605 / JCM 1781 / NBRC 1676 / NRRL YB-4239) (Yeast).